Reading from the N-terminus, the 284-residue chain is Putative transcription factor kapC (284 aa).

A compositionally biased stretch (pro residues) spans 1–10 (MQPTLAPAPH). Positions 1–121 (MQPTLAPAPH…NRAAQRAFRQ (121 aa)) are disordered. Over residues 26 to 40 (HDQLLAAHQHLSHPQ) the composition is skewed to low complexity. Positions 41-54 (QPRPQPPAAQPPHM) are enriched in pro residues. Over residues 57 to 67 (NTTSPRDQNNI) the composition is skewed to polar residues. The region spanning 102-165 (PLSTSKRAAQ…EYIINLQSRL (64 aa)) is the bZIP domain. A basic motif region spans residues 103–126 (LSTSKRAAQNRAAQRAFRQRKESY). The segment covering 108–118 (RAAQNRAAQRA) has biased composition (low complexity). The segment at 130-161 (LEEQVKEFDTMSEAFKALQAENYQLREYIINL) is leucine-zipper. A disordered region spans residues 174–284 (ELPGNIDLSQ…QAPHGLPMVS (111 aa)). Over residues 193 to 222 (PGAGPATTSSSAPAPPSGAQQAQPPQGAAS) the composition is skewed to low complexity.

This sequence belongs to the bZIP family.

It is found in the nucleus. Functionally, putative transcription factor. The chain is Putative transcription factor kapC (kapC) from Aspergillus oryzae (strain ATCC 42149 / RIB 40) (Yellow koji mold).